The primary structure comprises 62 residues: Sperm protamine P1 (62 aa).

Residues 1–62 (MARYRHSRSR…RYSRRRRRRY (62 aa)) form a disordered region.

This sequence belongs to the protamine P1 family. In terms of tissue distribution, testis.

Its subcellular location is the nucleus. The protein resides in the chromosome. In terms of biological role, protamines substitute for histones in the chromatin of sperm during the haploid phase of spermatogenesis. They compact sperm DNA into a highly condensed, stable and inactive complex. The chain is Sperm protamine P1 (PRM1) from Wallabia bicolor (Swamp wallaby).